The primary structure comprises 481 residues: Aspartyl/glutamyl-tRNA(Asn/Gln) amidotransferase subunit B (481 aa).

Belongs to the GatB/GatE family. GatB subfamily. As to quaternary structure, heterotrimer of A, B and C subunits.

The enzyme catalyses L-glutamyl-tRNA(Gln) + L-glutamine + ATP + H2O = L-glutaminyl-tRNA(Gln) + L-glutamate + ADP + phosphate + H(+). It catalyses the reaction L-aspartyl-tRNA(Asn) + L-glutamine + ATP + H2O = L-asparaginyl-tRNA(Asn) + L-glutamate + ADP + phosphate + 2 H(+). Its function is as follows. Allows the formation of correctly charged Asn-tRNA(Asn) or Gln-tRNA(Gln) through the transamidation of misacylated Asp-tRNA(Asn) or Glu-tRNA(Gln) in organisms which lack either or both of asparaginyl-tRNA or glutaminyl-tRNA synthetases. The reaction takes place in the presence of glutamine and ATP through an activated phospho-Asp-tRNA(Asn) or phospho-Glu-tRNA(Gln). The chain is Aspartyl/glutamyl-tRNA(Asn/Gln) amidotransferase subunit B from Ectopseudomonas mendocina (strain ymp) (Pseudomonas mendocina).